A 613-amino-acid polypeptide reads, in one-letter code: Lysophospholipase 1 (613 aa).

The N-terminal stretch at 1 to 21 (MLFRGLSLWMLFLASCLSALA) is a signal peptide. The region spanning 55–593 (DCPSDNIVES…YNYCWSGLYD (539 aa)) is the PLA2c domain. 13 N-linked (GlcNAc...) asparagine glycosylation sites follow: Asn-142, Asn-173, Asn-220, Asn-244, Asn-281, Asn-319, Asn-348, Asn-365, Asn-494, Asn-499, Asn-523, Asn-551, and Asn-572.

The protein belongs to the lysophospholipase family.

It is found in the secreted. The catalysed reaction is a 1-acyl-sn-glycero-3-phosphocholine + H2O = sn-glycerol 3-phosphocholine + a fatty acid + H(+). Functionally, catalyzes the release of fatty acids from lysophospholipids. Required for survival under high osmolarity, for normal osmotic stress-induced gene expression, and for nutrient-mediated repression of sexual differentiation. The protein is Lysophospholipase 1 (plb1) of Schizosaccharomyces pombe (strain 972 / ATCC 24843) (Fission yeast).